Here is a 318-residue protein sequence, read N- to C-terminus: D-alanine--D-alanine ligase (318 aa).

In terms of domain architecture, ATP-grasp spans 116 to 311 (KQVWQSLGIP…FQQLVLAILA (196 aa)). 142 to 197 (SAELGFPLIVKPAHEGSSIGMAKVNSEQELVAAWKDAAKYDSQVLVEQWIHGPEFT) serves as a coordination point for ATP. The Mg(2+) site is built by Asp265, Glu278, and Asn280.

It belongs to the D-alanine--D-alanine ligase family. Mg(2+) serves as cofactor. Requires Mn(2+) as cofactor.

It is found in the cytoplasm. The enzyme catalyses 2 D-alanine + ATP = D-alanyl-D-alanine + ADP + phosphate + H(+). Its pathway is cell wall biogenesis; peptidoglycan biosynthesis. In terms of biological role, cell wall formation. This Pseudomonas entomophila (strain L48) protein is D-alanine--D-alanine ligase.